A 50-amino-acid polypeptide reads, in one-letter code: Photosystem I reaction center subunit IX (50 aa).

Residues 7–27 (YLSTAPVLAILCCSFLAGLVI) form a helical membrane-spanning segment.

Belongs to the PsaJ family.

The protein localises to the plastid. It is found in the chloroplast thylakoid membrane. Its function is as follows. May help in the organization of the PsaE and PsaF subunits. This Pinus koraiensis (Korean pine) protein is Photosystem I reaction center subunit IX.